We begin with the raw amino-acid sequence, 130 residues long: Small ribosomal subunit protein uS9 (130 aa).

The protein belongs to the universal ribosomal protein uS9 family.

The protein is Small ribosomal subunit protein uS9 of Polaromonas naphthalenivorans (strain CJ2).